Here is a 443-residue protein sequence, read N- to C-terminus: Xaa-Pro dipeptidase (443 aa).

Mn(2+)-binding residues include aspartate 246, aspartate 257, histidine 339, glutamate 384, and glutamate 423.

It belongs to the peptidase M24B family. Bacterial-type prolidase subfamily. The cofactor is Mn(2+).

It catalyses the reaction Xaa-L-Pro dipeptide + H2O = an L-alpha-amino acid + L-proline. Splits dipeptides with a prolyl residue in the C-terminal position. In Salmonella paratyphi B (strain ATCC BAA-1250 / SPB7), this protein is Xaa-Pro dipeptidase.